Consider the following 222-residue polypeptide: Probable nicotinate-nucleotide adenylyltransferase (222 aa).

Belongs to the NadD family.

The enzyme catalyses nicotinate beta-D-ribonucleotide + ATP + H(+) = deamido-NAD(+) + diphosphate. The protein operates within cofactor biosynthesis; NAD(+) biosynthesis; deamido-NAD(+) from nicotinate D-ribonucleotide: step 1/1. Catalyzes the reversible adenylation of nicotinate mononucleotide (NaMN) to nicotinic acid adenine dinucleotide (NaAD). The chain is Probable nicotinate-nucleotide adenylyltransferase from Stenotrophomonas maltophilia (strain K279a).